Here is a 274-residue protein sequence, read N- to C-terminus: Ribosomal RNA small subunit methyltransferase A (274 aa).

Positions 15, 17, 42, 64, 89, and 108 each coordinate S-adenosyl-L-methionine.

The protein belongs to the class I-like SAM-binding methyltransferase superfamily. rRNA adenine N(6)-methyltransferase family. RsmA subfamily.

The protein resides in the cytoplasm. The catalysed reaction is adenosine(1518)/adenosine(1519) in 16S rRNA + 4 S-adenosyl-L-methionine = N(6)-dimethyladenosine(1518)/N(6)-dimethyladenosine(1519) in 16S rRNA + 4 S-adenosyl-L-homocysteine + 4 H(+). Its function is as follows. Specifically dimethylates two adjacent adenosines (A1518 and A1519) in the loop of a conserved hairpin near the 3'-end of 16S rRNA in the 30S particle. May play a critical role in biogenesis of 30S subunits. This is Ribosomal RNA small subunit methyltransferase A from Prochlorococcus marinus (strain MIT 9301).